Here is a 254-residue protein sequence, read N- to C-terminus: 5'-nucleotidase SurE (254 aa).

Asp8, Asp9, Ser39, and Asn97 together coordinate a divalent metal cation.

This sequence belongs to the SurE nucleotidase family. A divalent metal cation serves as cofactor.

The protein localises to the cytoplasm. It catalyses the reaction a ribonucleoside 5'-phosphate + H2O = a ribonucleoside + phosphate. In terms of biological role, nucleotidase that shows phosphatase activity on nucleoside 5'-monophosphates. The chain is 5'-nucleotidase SurE from Alkaliphilus metalliredigens (strain QYMF).